Reading from the N-terminus, the 154-residue chain is 6,7-dimethyl-8-ribityllumazine synthase (154 aa).

5-amino-6-(D-ribitylamino)uracil is bound by residues Phe-15, 47-49, and 71-73; these read TFD and AVI. 76 to 77 provides a ligand contact to (2S)-2-hydroxy-3-oxobutyl phosphate; sequence ET. The active-site Proton donor is His-79. Leu-104 lines the 5-amino-6-(D-ribitylamino)uracil pocket. Arg-119 provides a ligand contact to (2S)-2-hydroxy-3-oxobutyl phosphate.

It belongs to the DMRL synthase family.

It carries out the reaction (2S)-2-hydroxy-3-oxobutyl phosphate + 5-amino-6-(D-ribitylamino)uracil = 6,7-dimethyl-8-(1-D-ribityl)lumazine + phosphate + 2 H2O + H(+). It functions in the pathway cofactor biosynthesis; riboflavin biosynthesis; riboflavin from 2-hydroxy-3-oxobutyl phosphate and 5-amino-6-(D-ribitylamino)uracil: step 1/2. Functionally, catalyzes the formation of 6,7-dimethyl-8-ribityllumazine by condensation of 5-amino-6-(D-ribitylamino)uracil with 3,4-dihydroxy-2-butanone 4-phosphate. This is the penultimate step in the biosynthesis of riboflavin. This Saccharolobus solfataricus (strain ATCC 35092 / DSM 1617 / JCM 11322 / P2) (Sulfolobus solfataricus) protein is 6,7-dimethyl-8-ribityllumazine synthase.